A 196-amino-acid polypeptide reads, in one-letter code: V-type proton ATPase proteolipid subunit (196 aa).

Topologically, residues 1–25 (MFQLLSFLLSGEATAVERIITDACP) are lumenal. Residues 26-46 (VYAPFFGAMGVTAALVFTVMG) traverse the membrane as a helical segment. At 47 to 72 (AAYGTAKASVGISNMGVMKPDLVIKA) the chain is on the cytoplasmic side. Residues 73–93 (FIPVIFAGVIAIYGLIICVIL) traverse the membrane as a helical segment. Over 94–111 (VGGIKPNANYTLMKSFTD) the chain is Lumenal. The chain crosses the membrane as a helical span at residues 112–132 (LGAGLTVGLCGLAAGMAIGIV). Topologically, residues 133–150 (GDSGVRAFGQQPKLYVIM) are cytoplasmic. The helical transmembrane segment at 151-171 (MLILIFSEALGLYGLIIGILL) threads the bilayer. Residues 172-196 (SSVSDTYCPGQALVPLNSGNVIGKN) lie on the Lumenal side of the membrane.

Belongs to the V-ATPase proteolipid subunit family. V-ATPase is a heteromultimeric enzyme composed of a peripheral catalytic V1 complex (main components: subunits A, B, C, D, E, and F) attached to an integral membrane V0 proton pore complex (main component: the proteolipid protein; which is present as a hexamer that forms the proton-conducting pore).

The protein localises to the vacuole membrane. In terms of biological role, proton-conducting pore forming subunit of the membrane integral V0 complex of vacuolar ATPase. V-ATPase is responsible for acidifying a variety of intracellular compartments in eukaryotic cells. The protein is V-type proton ATPase proteolipid subunit (vatP) of Dictyostelium discoideum (Social amoeba).